The following is a 161-amino-acid chain: Ribosome maturation factor RimP (161 aa).

This sequence belongs to the RimP family.

The protein resides in the cytoplasm. Required for maturation of 30S ribosomal subunits. This is Ribosome maturation factor RimP from Desulfosudis oleivorans (strain DSM 6200 / JCM 39069 / Hxd3) (Desulfococcus oleovorans).